A 437-amino-acid chain; its full sequence is Selenocysteine lyase (437 aa).

At Met-1 the chain carries N-acetylmethionine. Residues 1–30 (MEAAGARNRDARSRAEKSPPESRKVYMDYN) form a disordered region. Over residues 7–26 (RNRDARSRAEKSPPESRKVY) the composition is skewed to basic and acidic residues. Lys-252 is modified (N6-(pyridoxal phosphate)lysine). The S-selanylcysteine intermediate role is filled by Cys-380.

It belongs to the class-V pyridoxal-phosphate-dependent aminotransferase family. In terms of assembly, homodimer. Pyridoxal 5'-phosphate is required as a cofactor.

The protein resides in the cytoplasm. It is found in the cytosol. It carries out the reaction L-selenocysteine + AH2 = hydrogenselenide + L-alanine + A + H(+). In terms of biological role, catalyzes the decomposition of L-selenocysteine to L-alanine and elemental selenium. The chain is Selenocysteine lyase (SCLY) from Bos taurus (Bovine).